Here is an 800-residue protein sequence, read N- to C-terminus: MQMQVLTAASSLPRATLLRPAAAEPWRQSFLQLQARPIQRPGIMLHCKAQLQGQETRERRQLDDDEHARPPQGGDDDVAASTSELPYMIESIKSKLRAARNSLGETTVSAYDTAWIALVNRLDGGGERSPQFPEAIDWIARNQLPDGSWGDAGMFIVQDRLINTLGCVVALATWGVHEEQRARGLAYIQDNLWRLGEDDEEWMMVGFEITFPVLLEKAKNLGLDINYDDPALQDIYAKRQLKLAKIPREALHARPTTLLHSLEGMENLDWERLLQFKCPAGSLHSSPAASAYALSETGDKELLEYLETAINNFDGGAPCTYPVDNFDRLWSVDRLRRLGISRYFTSEIEEYLEYAYRHLSPDGMSYGGLCPVKDIDDTAMAFRLLRLHGYNVSSSVFNHFEKDGEYFCFAGQSSQSLTAMYNSYRASQIVFPGDDDGLEQLRAYCRAFLEERRATGNLMDKWVIANGLPSEVEYALDFPWKASLPRVETRVYLEQYGASEDAWIGKGLYRMTLVNNDLYLEAAKADFTNFQRLSRLEWLSLKRWYIRNNLQAHGVTEQSVLRAYFLAAANIFEPNRAAERLGWARTAILAEAIASHLRQYSANGAADGMTERLISGLASHDWDWRESKDSAARSLLYALDELIDLHAFGNASDSLREAWKQWLMSWTNESQGSTGGDTALLLVRTIEICSGRHGSAEQSLKNSADYARLEQIASSMCSKLATKILAQNGGSMDNVEGIDQEVDVEMKELIQRVYGSSSNDVSSVTRQTFLDVVKSFCYVAHCSPETIDGHISKVLFEDVN.

A chloroplast-targeting transit peptide spans 1-47; that stretch reads MQMQVLTAASSLPRATLLRPAAAEPWRQSFLQLQARPIQRPGIMLHC. The segment at 52–80 is disordered; it reads QGQETRERRQLDDDEHARPPQGGDDDVAA. Residues 55–69 are compositionally biased toward basic and acidic residues; sequence ETRERRQLDDDEHAR. Lysine 242 serves as a coordination point for substrate. Mg(2+) is bound by residues aspartate 374 and aspartate 376. The DXDD motif signature appears at 374-377; the sequence is DIDD. Lysine 461 provides a ligand contact to substrate.

Belongs to the terpene synthase family. Requires Mg(2+) as cofactor.

The protein localises to the plastid. Its subcellular location is the chloroplast. It catalyses the reaction (2E,6E,10E)-geranylgeranyl diphosphate = ent-copalyl diphosphate. The protein operates within secondary metabolite biosynthesis; terpenoid biosynthesis. In terms of biological role, catalyzes the conversion of geranylgeranyl diphosphate to the phytoalexin precursor ent-copalyl diphosphate. In Oryza sativa subsp. japonica (Rice), this protein is Ent-copalyl diphosphate synthase 2, chloroplastic.